Here is a 329-residue protein sequence, read N- to C-terminus: NADH-quinone oxidoreductase subunit H (329 aa).

The next 9 helical transmembrane spans lie at 9–29 (LIKI…ATYI), 42–62 (GPCY…IKLF), 75–95 (FIFT…MAPI), 117–137 (IGFL…ILAG), 154–174 (IQLL…LMVV), 188–208 (GGFL…FLIA), 238–258 (LKWG…SFVI), 269–291 (WGFI…LSMW), and 309–329 (WKIM…IILI).

Belongs to the complex I subunit 1 family. As to quaternary structure, NDH-1 is composed of 14 different subunits. Subunits NuoA, H, J, K, L, M, N constitute the membrane sector of the complex.

The protein resides in the cell inner membrane. It catalyses the reaction a quinone + NADH + 5 H(+)(in) = a quinol + NAD(+) + 4 H(+)(out). In terms of biological role, NDH-1 shuttles electrons from NADH, via FMN and iron-sulfur (Fe-S) centers, to quinones in the respiratory chain. The immediate electron acceptor for the enzyme in this species is believed to be ubiquinone. Couples the redox reaction to proton translocation (for every two electrons transferred, four hydrogen ions are translocated across the cytoplasmic membrane), and thus conserves the redox energy in a proton gradient. This subunit may bind ubiquinone. This chain is NADH-quinone oxidoreductase subunit H, found in Helicobacter pylori (strain HPAG1).